The primary structure comprises 341 residues: Phosphoribosylaminoimidazole-succinocarboxamide synthase, chloroplastic (341 aa).

Belongs to the SAICAR synthetase family.

It localises to the plastid. The protein resides in the chloroplast. The enzyme catalyses 5-amino-1-(5-phospho-D-ribosyl)imidazole-4-carboxylate + L-aspartate + ATP = (2S)-2-[5-amino-1-(5-phospho-beta-D-ribosyl)imidazole-4-carboxamido]succinate + ADP + phosphate + 2 H(+). Its pathway is purine metabolism; IMP biosynthesis via de novo pathway; 5-amino-1-(5-phospho-D-ribosyl)imidazole-4-carboxamide from 5-amino-1-(5-phospho-D-ribosyl)imidazole-4-carboxylate: step 1/2. The sequence is that of Phosphoribosylaminoimidazole-succinocarboxamide synthase, chloroplastic (PUR7) from Vigna aconitifolia (Moth bean).